The sequence spans 277 residues: MGLPKSAYKKLLIDCPTRVINKNCAQRVKDVSPLITNFEKWSDKRKKLYFKDEEEMVGQFHLENFNLKNNLYGRLLASPMRAEKISKLKSCRELLIPLKVVPSTGKDQHADKDKLKLVPTLDYSKSYKSSYVLNSASIVQDNLAAATSWFPISVLQTSTPKSLEVDSSTFITEYNANLHAFIKARLSVIPNVGPSSINRVLLICDKRKTPPIEIQVVSHGKGLPITQSVFNLGYLHEPTLEAIVSKDAVTNGIYLDADNDKDLIKHLYSTLLFHSVN.

Belongs to the RRG8 family.

The protein localises to the mitochondrion. In terms of biological role, required for respiratory activity and maintenance and expression of the mitochondrial genome. This chain is Required for respiratory growth protein 8, mitochondrial (RRG8), found in Saccharomyces cerevisiae (strain ATCC 204508 / S288c) (Baker's yeast).